Consider the following 397-residue polypeptide: Elongation factor Tu (397 aa).

The tr-type G domain maps to 10–207 (KPHCNIGTIG…AVDEWIPQPE (198 aa)). The tract at residues 19–26 (GHVDHGKT) is G1. 19–26 (GHVDHGKT) contacts GTP. Mg(2+) is bound at residue T26. Residues 61 to 65 (GITIS) are G2. A G3 region spans residues 82 to 85 (DCPG). GTP-binding positions include 82–86 (DCPGH) and 137–140 (NKVD). The segment at 137–140 (NKVD) is G4. Positions 175–177 (SAL) are G5.

This sequence belongs to the TRAFAC class translation factor GTPase superfamily. Classic translation factor GTPase family. EF-Tu/EF-1A subfamily. In terms of assembly, monomer.

Its subcellular location is the cytoplasm. It carries out the reaction GTP + H2O = GDP + phosphate + H(+). In terms of biological role, GTP hydrolase that promotes the GTP-dependent binding of aminoacyl-tRNA to the A-site of ribosomes during protein biosynthesis. This chain is Elongation factor Tu, found in Sphingopyxis alaskensis (strain DSM 13593 / LMG 18877 / RB2256) (Sphingomonas alaskensis).